The chain runs to 135 residues: Global transcriptional regulator Spx 2 (135 aa).

The active site involves C10.

This sequence belongs to the ArsC family. Spx subfamily. In terms of assembly, interacts with the C-terminal domain of the alpha subunit of the RNAP.

The protein localises to the cytoplasm. Its function is as follows. Global transcriptional regulator that plays a key role in stress response and exerts either positive or negative regulation of genes. Acts by interacting with the C-terminal domain of the alpha subunit of the RNA polymerase (RNAP). This interaction can enhance binding of RNAP to the promoter region of target genes and stimulate their transcription, or block interaction of RNAP with activator. This Oceanobacillus iheyensis (strain DSM 14371 / CIP 107618 / JCM 11309 / KCTC 3954 / HTE831) protein is Global transcriptional regulator Spx 2.